We begin with the raw amino-acid sequence, 137 residues long: Acyl carrier protein 4, chloroplastic (137 aa).

Residues 1–48 constitute a chloroplast transit peptide; the sequence is MASLSTTSLSFKAPSTTISQVLRKASSSQSVTFGRFTSSTKSLRLQIS. Residues 53-128 enclose the Carrier domain; it reads AETVQKVSDI…EAADLIEDLV (76 aa). An O-(pantetheine 4'-phosphoryl)serine modification is found at Ser-88.

The protein belongs to the acyl carrier protein (ACP) family. Post-translationally, 4'-phosphopantetheine is transferred from CoA to a specific serine of apo-ACP by acpS. This modification is essential for activity because fatty acids are bound in thioester linkage to the sulfhydryl of the prosthetic group.

It is found in the plastid. Its subcellular location is the chloroplast. Carrier of the growing fatty acid chain in fatty acid biosynthesis that plays a major role in the biosynthesis of fatty acids in leaves. Required for the biosynthesis of chloroplast photosynthetic membrane lipids such as monogalactosyldiacylglycerol, digalactosyldiacylglycerol and phosphatidylglycerol. Is essential for the biosynthesis of the cuticular wax and cutin polymers in leaves, and for the establishment of systemic acquired resistance (SAR). The chain is Acyl carrier protein 4, chloroplastic (ACP4) from Arabidopsis thaliana (Mouse-ear cress).